The sequence spans 50 residues: Conotoxin Bu13 (50 aa).

Ala1 is a signal peptide. Residues 2–24 constitute a propeptide that is removed on maturation; sequence EDSRGTQLHRALRKTTKLSLSIR. Intrachain disulfides connect Cys25–Cys40, Cys32–Cys44, and Cys39–Cys49.

The protein belongs to the conotoxin O1 superfamily. In terms of tissue distribution, expressed by the venom duct.

Its subcellular location is the secreted. In Conus bullatus (Bubble cone), this protein is Conotoxin Bu13.